The sequence spans 300 residues: Acetylglutamate kinase (300 aa).

Residues 73–74 (GG), arginine 95, and asparagine 197 contribute to the substrate site.

It belongs to the acetylglutamate kinase family. ArgB subfamily.

Its subcellular location is the cytoplasm. The enzyme catalyses N-acetyl-L-glutamate + ATP = N-acetyl-L-glutamyl 5-phosphate + ADP. It participates in amino-acid biosynthesis; L-arginine biosynthesis; N(2)-acetyl-L-ornithine from L-glutamate: step 2/4. In terms of biological role, catalyzes the ATP-dependent phosphorylation of N-acetyl-L-glutamate. This is Acetylglutamate kinase from Bordetella petrii (strain ATCC BAA-461 / DSM 12804 / CCUG 43448).